A 48-amino-acid chain; its full sequence is Large ribosomal subunit protein bL34 (48 aa).

Belongs to the bacterial ribosomal protein bL34 family.

This Mycoplasma genitalium (strain ATCC 33530 / DSM 19775 / NCTC 10195 / G37) (Mycoplasmoides genitalium) protein is Large ribosomal subunit protein bL34 (rpmH).